The primary structure comprises 616 residues: Dihydroxy-acid dehydratase (616 aa).

Aspartate 81 serves as a coordination point for Mg(2+). Cysteine 122 serves as a coordination point for [2Fe-2S] cluster. 2 residues coordinate Mg(2+): aspartate 123 and lysine 124. Residue lysine 124 is modified to N6-carboxylysine. [2Fe-2S] cluster is bound at residue cysteine 195. Glutamate 491 provides a ligand contact to Mg(2+). Serine 517 (proton acceptor) is an active-site residue.

This sequence belongs to the IlvD/Edd family. Homodimer. The cofactor is [2Fe-2S] cluster. It depends on Mg(2+) as a cofactor.

The enzyme catalyses (2R)-2,3-dihydroxy-3-methylbutanoate = 3-methyl-2-oxobutanoate + H2O. The catalysed reaction is (2R,3R)-2,3-dihydroxy-3-methylpentanoate = (S)-3-methyl-2-oxopentanoate + H2O. It functions in the pathway amino-acid biosynthesis; L-isoleucine biosynthesis; L-isoleucine from 2-oxobutanoate: step 3/4. It participates in amino-acid biosynthesis; L-valine biosynthesis; L-valine from pyruvate: step 3/4. Its function is as follows. Functions in the biosynthesis of branched-chain amino acids. Catalyzes the dehydration of (2R,3R)-2,3-dihydroxy-3-methylpentanoate (2,3-dihydroxy-3-methylvalerate) into 2-oxo-3-methylpentanoate (2-oxo-3-methylvalerate) and of (2R)-2,3-dihydroxy-3-methylbutanoate (2,3-dihydroxyisovalerate) into 2-oxo-3-methylbutanoate (2-oxoisovalerate), the penultimate precursor to L-isoleucine and L-valine, respectively. This Escherichia coli O9:H4 (strain HS) protein is Dihydroxy-acid dehydratase.